Here is a 239-residue protein sequence, read N- to C-terminus: Myogenic factor 6 (239 aa).

Residues His28–Glu64 form a disordered region. Polar residues predominate over residues Tyr38–Gly58. One can recognise a bHLH domain in the interval Asp96 to Leu147. The disordered stretch occupies residues Asp155 to Thr189.

As to quaternary structure, efficient DNA binding requires dimerization with another bHLH protein.

The protein resides in the nucleus. Involved in muscle differentiation (myogenic factor). Induces fibroblasts to differentiate into myoblasts. Probable sequence specific DNA-binding protein. The polypeptide is Myogenic factor 6 (myf6) (Takifugu rubripes (Japanese pufferfish)).